A 501-amino-acid chain; its full sequence is MEPGPSVSPGPSRSFKEELLCAVCYDPFRDAVTLRCGHNFCRRCVSGCWEVQTTPSCPVCKERAVPGELRTNHTLNNLVETLLREEAEGARWTGRRSPRPCRAHRAPLTLFCLEDKELLCCACQADARHQEHRVQPIKDTAQDFRAKCKNMEHVLREKAKAFWALRRTYEAIAKHNEVQTTWLEGRIRDEFDKLRDFLRVEEQATLDAMKEESRKKHLQAEEKMKQLAEQTEALAREIERLQMEMKEDDMTFLMKHKSRKRRLFCTVEPAPLQPGLLMDACKYLESLQYRVWKKMLGSVESVPFSLDPNTAAGWLKVADDLTSVINHGYRVQVENPERFSSAPCLLGSQVFSKGSHSWEVDVGGLPTWRVGVVRVQAHAQAQAQADVGGEGHSHSCYHDTRSGFWYLCRTQGVDGDHCMTSDTATAPLVQAMPRRLRVELECEEGELSFYDSERHCHLYTFHAHFGEVRPYFYLGASRGDGPPEPLRICHLRVSIKEELDI.

Met1 is modified (N-acetylmethionine). Position 8 is a phosphoserine (Ser8). The RING-type zinc finger occupies 21-61 (CAVCYDPFRDAVTLRCGHNFCRRCVSGCWEVQTTPSCPVCK). The B box-type zinc finger occupies 96 to 137 (RSPRPCRAHRAPLTLFCLEDKELLCCACQADARHQEHRVQPI). The Zn(2+) site is built by Cys101, His104, Cys123, and His129. The stretch at 200–252 (VEEQATLDAMKEESRKKHLQAEEKMKQLAEQTEALAREIERLQMEMKEDDMTF) forms a coiled coil. The B30.2/SPRY domain maps to 284–495 (LESLQYRVWK…LRICHLRVSI (212 aa)).

It belongs to the TRIM/RBCC family. As to quaternary structure, interacts with PKM isoform M2, but not isoform M1; this interaction may compete with that between PKM and FGFR1, and hence reduces FGFR1-dependent tyrosine phosphorylation of PKM. Interacts with IRF7; this interaction promotes IRF7 proteasomal degradation. Interacts with TRAF3; this interaction promotes TRAF3 activation. As to expression, widely expressed. Highly expressed in brain, heart, kidney, spleen, skeletal muscle, lung and thymus. Lower expression found in stomach, large intestine and bone marrow.

It localises to the cytoplasm. Its subcellular location is the nucleus. It catalyses the reaction S-ubiquitinyl-[E2 ubiquitin-conjugating enzyme]-L-cysteine + [acceptor protein]-L-lysine = [E2 ubiquitin-conjugating enzyme]-L-cysteine + N(6)-ubiquitinyl-[acceptor protein]-L-lysine.. The protein operates within protein modification; protein ubiquitination. E3 ubiquitin-protein ligase that participates in multiple biological processes including cell death, glucose metabolism, and in particular, the innate immune response. Mediates 'Lys-63'-linked polyubiquitination of TRAF3 thereby promoting type I interferon production via RIG-I signaling pathway. Can also catalyze 'Lys-48'-linked polyubiquitination and proteasomal degradation of viral proteins such as influenza virus PB2. Acts as a negative feedback regulator of TLR7- and TLR9-triggered signaling. Mechanistically, promotes the 'Lys-48'-linked ubiquitination of IRF7 and induces its degradation via a proteasome-dependent pathway. Reduces FGFR1-dependent tyrosine phosphorylation of PKM, inhibiting PKM-dependent lactate production, glucose metabolism, and cell growth. In Mus musculus (Mouse), this protein is E3 ubiquitin-protein ligase TRIM35 (Trim35).